The primary structure comprises 201 residues: Recombination protein RecR (201 aa).

The segment at 60 to 75 adopts a C4-type zinc-finger fold; sequence CKRCGSYAETEICEIC. Positions 83–178 constitute a Toprim domain; it reads HTFCVVEQPE…NVTRIAYGIT (96 aa).

This sequence belongs to the RecR family.

In terms of biological role, may play a role in DNA repair. It seems to be involved in an RecBC-independent recombinational process of DNA repair. It may act with RecF and RecO. This is Recombination protein RecR from Leptospira interrogans serogroup Icterohaemorrhagiae serovar copenhageni (strain Fiocruz L1-130).